The following is a 309-amino-acid chain: Olfactory receptor 1A1 (309 aa).

Residues 1–25 lie on the Extracellular side of the membrane; it reads MRENNQSSTLEFILLGVTGQQEQED. N-linked (GlcNAc...) asparagine glycosylation is present at asparagine 5. The chain crosses the membrane as a helical span at residues 26-49; it reads FFYILFLFIYPITLIGNLLIVLAI. The Cytoplasmic segment spans residues 50–57; sequence CSDVHLHN. Residues 58–79 traverse the membrane as a helical segment; the sequence is PMYFLLANLSLVDIFFSSVTIP. At 80–100 the chain is on the extracellular side; sequence KMLANHLSGSKSISFGGCLTQ. Cysteine 97 and cysteine 189 form a disulfide bridge. The chain crosses the membrane as a helical span at residues 101–120; that stretch reads MYFMIDLGNTDSYTLAAMAY. The Cytoplasmic portion of the chain corresponds to 121–139; the sequence is DRAVAISRPLHYTTIMSPR. The helical transmembrane segment at 140-158 threads the bilayer; the sequence is SCIWLIAGSWVIGNANALP. Residues 159–195 are Extracellular-facing; it reads HTLLTASLSFCGNQEVANFYCDITPLLKLSCSDIHFH. Residues 196–218 form a helical membrane-spanning segment; it reads VKMMYLGVGIFSVPLLCIIVSYI. The Cytoplasmic segment spans residues 219–235; it reads RVFSTVFQVPSTKGVLK. Residues 236–258 form a helical membrane-spanning segment; the sequence is AFSTCGSHLTVVSLYYGTVMGMY. The Extracellular segment spans residues 259 to 270; it reads FRPLTNYSLKDA. A glycan (N-linked (GlcNAc...) asparagine) is linked at asparagine 264. Residues 271 to 290 form a helical membrane-spanning segment; the sequence is VITVMCTAVTPMLNPFIYSL. The Cytoplasmic portion of the chain corresponds to 291–309; it reads RNRDMKAALQKLFNKRISS.

The protein belongs to the G-protein coupled receptor 1 family.

It is found in the cell membrane. Its function is as follows. Odorant receptor. This chain is Olfactory receptor 1A1 (OR1A1), found in Gorilla gorilla gorilla (Western lowland gorilla).